The chain runs to 544 residues: CTP synthase (544 aa).

Residues 1–267 (MAKFVFITGG…CREVLDVLDL (267 aa)) are amidoligase domain. Ser-13 lines the CTP pocket. Ser-13 is a binding site for UTP. ATP contacts are provided by residues 14-19 (SIGKGI) and Asp-71. Mg(2+)-binding residues include Asp-71 and Glu-141. Residues 148–150 (DIE), 188–193 (KTKPTQ), and Lys-224 contribute to the CTP site. UTP is bound by residues 188 to 193 (KTKPTQ) and Lys-224. A Glutamine amidotransferase type-1 domain is found at 292-534 (KVALVGKYIQ…IEAAQQRLPS (243 aa)). Gly-354 is an L-glutamine binding site. Cys-381 (nucleophile; for glutamine hydrolysis) is an active-site residue. L-glutamine-binding positions include 382–385 (LGMQ), Glu-405, and Arg-462. Active-site residues include His-507 and Glu-509.

Belongs to the CTP synthase family. Homotetramer.

It carries out the reaction UTP + L-glutamine + ATP + H2O = CTP + L-glutamate + ADP + phosphate + 2 H(+). The catalysed reaction is L-glutamine + H2O = L-glutamate + NH4(+). It catalyses the reaction UTP + NH4(+) + ATP = CTP + ADP + phosphate + 2 H(+). It functions in the pathway pyrimidine metabolism; CTP biosynthesis via de novo pathway; CTP from UDP: step 2/2. Its activity is regulated as follows. Allosterically activated by GTP, when glutamine is the substrate; GTP has no effect on the reaction when ammonia is the substrate. The allosteric effector GTP functions by stabilizing the protein conformation that binds the tetrahedral intermediate(s) formed during glutamine hydrolysis. Inhibited by the product CTP, via allosteric rather than competitive inhibition. Its function is as follows. Catalyzes the ATP-dependent amination of UTP to CTP with either L-glutamine or ammonia as the source of nitrogen. Regulates intracellular CTP levels through interactions with the four ribonucleotide triphosphates. The protein is CTP synthase of Parasynechococcus marenigrum (strain WH8102).